A 99-amino-acid polypeptide reads, in one-letter code: DNA/RNA-binding protein Alba 1 (99 aa).

At Lys-17 the chain carries N6-acetyllysine.

This sequence belongs to the histone-like Alba family. Acetylated. Acetylation at Lys-17 decreases DNA-binding affinity.

It is found in the cytoplasm. The protein resides in the chromosome. Binds double-stranded DNA tightly but without sequence specificity. Involved in DNA compaction. This is DNA/RNA-binding protein Alba 1 from Sulfurisphaera tokodaii (strain DSM 16993 / JCM 10545 / NBRC 100140 / 7) (Sulfolobus tokodaii).